The chain runs to 328 residues: MKAPVRVAVTGAAGQIGYALLFRIASGEMLGKDQPVILQLLELPIEKAQAALKGVMMELEDCAFPLLAGMVGTDDAEVAFKDVDVALLVGSRPRGPGMERKDLLLANAEIFTAQGAALNKVAKRDVKVLVVGNPANTNAYIAMKSAPDLDPKNFTAMLRLDHNRALSQLSAKLGKPVAGIEKLAVWGNHSPTMYPDYRFATADGASIGDAINDQEWNASTFIPTVGKRGAAIIEARGLSSAASAANAAIDHIRDWVLGTSGKWVTMGVPSDGSYGIPEGVMFGFPVTTENGKYTIVKDLPIDDFSQKYIDKTLAELEEERSGVAHLLG.

11–17 (GAAGQIG) serves as a coordination point for NAD(+). Substrate is bound by residues Arg-94 and Arg-100. NAD(+) contacts are provided by residues Asn-107, Gln-114, and 131–133 (VGN). Positions 133 and 164 each coordinate substrate. The Proton acceptor role is filled by His-189.

Belongs to the LDH/MDH superfamily. MDH type 2 family.

It carries out the reaction (S)-malate + NAD(+) = oxaloacetate + NADH + H(+). Its function is as follows. Catalyzes the reversible oxidation of malate to oxaloacetate. The protein is Malate dehydrogenase of Xanthomonas axonopodis pv. citri (strain 306).